A 182-amino-acid polypeptide reads, in one-letter code: Probable RNA 2'-phosphotransferase (182 aa).

It belongs to the KptA/TPT1 family.

In terms of biological role, removes the 2'-phosphate from RNA via an intermediate in which the phosphate is ADP-ribosylated by NAD followed by a presumed transesterification to release the RNA and generate ADP-ribose 1''-2''-cyclic phosphate (APPR&gt;P). May function as an ADP-ribosylase. The polypeptide is Probable RNA 2'-phosphotransferase (Acetivibrio thermocellus (strain ATCC 27405 / DSM 1237 / JCM 9322 / NBRC 103400 / NCIMB 10682 / NRRL B-4536 / VPI 7372) (Clostridium thermocellum)).